The chain runs to 131 residues: Arsenate reductase (131 aa).

Catalysis depends on nucleophile residues C10, C82, and C89. 2 cysteine pairs are disulfide-bonded: C10/C82 and C82/C89.

This sequence belongs to the low molecular weight phosphotyrosine protein phosphatase family. Thioredoxin-coupled ArsC subfamily.

The protein localises to the cytoplasm. The enzyme catalyses arsenate + [thioredoxin]-dithiol + H(+) = arsenite + [thioredoxin]-disulfide + H2O. Functionally, catalyzes the reduction of arsenate [As(V)] to arsenite [As(III)]. The chain is Arsenate reductase from Staphylococcus aureus (strain COL).